The primary structure comprises 337 residues: MRVLGIETSCDETGIAIYDDEKGLLANQLYSQVKLHADYGGVVPELASRDHVRKTVPLIQAALKESGLTAKDIDAVAYTAGPGLVGALLVGATVGRSLAFAWNVPAIPVHHMEGHLLAPMLEDNPPEFPFVALLVSGGHTQLISVTGIGQYELLGESIDDAAGEAFDKTAKLLGLDYPGGPLLSKMAAQGTAGRFVFPRPMTDRPGLDFSFSGLKTFAANTIRDNGTDDQTRADIARAFEDAVVDTLMIKCKRALDLTGFKRLVMAGGVSANRTLRAKLAEMMKKRRGEVFYARPEFCTDNGAMIAYAGMVRFKAGATADLGVSVRPRWPLAELPAA.

Residues histidine 111 and histidine 115 each contribute to the Fe cation site. Substrate-binding positions include 134-138 (LVSGG), aspartate 167, glycine 180, and asparagine 272. Position 300 (aspartate 300) interacts with Fe cation.

Belongs to the KAE1 / TsaD family. Fe(2+) is required as a cofactor.

Its subcellular location is the cytoplasm. The catalysed reaction is L-threonylcarbamoyladenylate + adenosine(37) in tRNA = N(6)-L-threonylcarbamoyladenosine(37) in tRNA + AMP + H(+). Its function is as follows. Required for the formation of a threonylcarbamoyl group on adenosine at position 37 (t(6)A37) in tRNAs that read codons beginning with adenine. Is involved in the transfer of the threonylcarbamoyl moiety of threonylcarbamoyl-AMP (TC-AMP) to the N6 group of A37, together with TsaE and TsaB. TsaD likely plays a direct catalytic role in this reaction. This is tRNA N6-adenosine threonylcarbamoyltransferase from Escherichia coli O157:H7.